A 352-amino-acid chain; its full sequence is Invasion chromosome antigen T (352 aa).

Belongs to the IcaT/YfdF family.

It localises to the secreted. In terms of biological role, may contribute to pathogenesis, although some of its characteristics suggest it is a fossil gene. This Shigella flexneri serotype 5a (strain M90T) protein is Invasion chromosome antigen T.